The sequence spans 449 residues: Putative F-box/FBD/LRR-repeat protein At5g62970 (449 aa).

Residues 2–50 (DKISGFSDDELLVKILSFLPFKFAITTSVLSKQWKFLWMRVPKLEYDED) form the F-box domain. LRR repeat units follow at residues 27-52 (TTSVLSKQWKFLWMRVPKLEYDEDSM), 81-107 (GHRMRSFIEKNLPLHSSPVIESLRLKF), 158-185 (TLKLRNNILVDVPHVFSLPSLKILHLER), 186-211 (VTYGDGESLQRLLSNCSVLEDLVVEL), 252-279 (YFKLTDLSKTFSGLIENMPKLEEANITA), and 328-354 (IHNAYWSELLYWLLKASPKLQNLEFDE). Residues 368–418 (FWNQPNSVPQCLLSTLQTFEWSGYPGSVQGKDLATYILRKSRQLKIATISI) form the FBD domain.

The protein is Putative F-box/FBD/LRR-repeat protein At5g62970 of Arabidopsis thaliana (Mouse-ear cress).